We begin with the raw amino-acid sequence, 90 residues long: Probable Fe(2+)-trafficking protein (90 aa).

Belongs to the Fe(2+)-trafficking protein family.

Functionally, could be a mediator in iron transactions between iron acquisition and iron-requiring processes, such as synthesis and/or repair of Fe-S clusters in biosynthetic enzymes. In Variovorax paradoxus (strain S110), this protein is Probable Fe(2+)-trafficking protein.